We begin with the raw amino-acid sequence, 782 residues long: Coiled-coil alpha-helical rod protein 1 (782 aa).

Basic and acidic residues-rich tracts occupy residues 62–74 and 208–218; these read ERDV…EPGR and ETRRAGEAKEL. Disordered stretches follow at residues 62-82 and 185-218; these read ERDV…WGLE and AHKE…AKEL. Coiled-coil stretches lie at residues 82–314, 344–398, and 498–691; these read EGSQ…ELTR, LMVQ…EVER, and VTDV…QQEG.

It localises to the cytoplasm. The protein localises to the nucleus. Functionally, may be a regulator of keratinocyte proliferation or differentiation. The sequence is that of Coiled-coil alpha-helical rod protein 1 (CCHCR1) from Gorilla gorilla gorilla (Western lowland gorilla).